Here is a 407-residue protein sequence, read N- to C-terminus: MQQKAFEESRYPWQESFENVAVCLPLRCPRCGDHTRFRSLSSLRAHLEFSHSYEERTLLTKCSLFPSLKDTDLVTSSELLKPGKLQSSGNVVKQKPSYVNLYSISHEHSKDRKPFEVVAERPVSYVQTYTAMDLHADSLDGTRSGPGLPTSDTKASFEAHVREKFNRMVEAVDRTIEKRIDKLTKELAQKTAELLEVRAAFVQLTQKKQEVQRRERALNRQVDVAVEMIAVLRQRLTESEEELLRKEEEVVTFNHFLEAAAEKEVQGKARLQDFIENLLQRVELAEKQLEYYQSQQASGFVRDLSGHVLTDISSNRKPKCLSRGHPHSVCNHPDLKAHFHPKGRNHLKKAKDDRASMQPAKAIHEQAESSRDLCRPPKKGELLGFGRKGNIRPKMAKKKPTAIVNII.

The residue at position 16 (serine 16) is a Phosphoserine. Residues 26–51 (LRCPRCGDHTRFRSLSSLRAHLEFSH) form a C2H2-type; degenerate zinc finger. At serine 138 the chain carries Phosphoserine. A coiled-coil region spans residues 169–297 (VEAVDRTIEK…QLEYYQSQQA (129 aa)). Residue threonine 175 is modified to Phosphothreonine. Residues 347–392 (LKKAKDDRASMQPAKAIHEQAESSRDLCRPPKKGELLGFGRKGNIR) are disordered. Residues 362 to 381 (AIHEQAESSRDLCRPPKKGE) are compositionally biased toward basic and acidic residues. The residue at position 369 (serine 369) is a Phosphoserine.

As to quaternary structure, homodimer. Interacts with NDE1 and NDEL1. Does not interact with TUBG1. Interacts with DISC1. Interacts with PARP1. Interacts with MCRS1. As to expression, isoform 1 is expressed in brain. Isoform 2 is expressed in placenta and at low level in lung and liver. Isoform 3 is expressed in kidney and pancreas. Isoform 1 is expressed exclusively in brain.

Its subcellular location is the cytoplasm. The protein localises to the cytoskeleton. It is found in the microtubule organizing center. The protein resides in the centrosome. Involved in the regulation of neurogenesis. Negatively regulates neurite outgrowth. Involved in the morphogenesis of basket cells in the somatosensory cortex during embryogenesis. Involved in the positive regulation of oligodendrocyte differentiation during postnatal growth. Involved in dendritic arborization, morphogenesis of spine density dendrite, and establishment of postsynaptic dendrite density in cortical pyramidal neurons. Involved in homologous recombination (HR) repair pathway. Required for proper resolution of DNA double-strand breaks (DSBs) by HR. Is required for recovery of stalled replication forks, and directly contributes to genomic stability. Interacts with PARP1 and mediates MRE11-dependent DNA end resection during replication fork recovery. Contributes to genomic stability by preventing telomere dysfunction. This is Protein ZNF365 (ZNF365) from Homo sapiens (Human).